Reading from the N-terminus, the 100-residue chain is NADH-quinone oxidoreductase subunit K (100 aa).

3 helical membrane-spanning segments follow: residues 4–24 (LFHG…SLIV), 28–48 (ILFM…ALVV), and 60–80 (IMYI…LALL).

The protein belongs to the complex I subunit 4L family. NDH-1 is composed of 13 different subunits. Subunits NuoA, H, J, K, L, M, N constitute the membrane sector of the complex.

The protein localises to the cell membrane. The catalysed reaction is a quinone + NADH + 5 H(+)(in) = a quinol + NAD(+) + 4 H(+)(out). Its function is as follows. NDH-1 shuttles electrons from NADH, via FMN and iron-sulfur (Fe-S) centers, to quinones in the respiratory chain. The immediate electron acceptor for the enzyme in this species is believed to be ubiquinone. Couples the redox reaction to proton translocation (for every two electrons transferred, four hydrogen ions are translocated across the cytoplasmic membrane), and thus conserves the redox energy in a proton gradient. The polypeptide is NADH-quinone oxidoreductase subunit K (Buchnera aphidicola subsp. Schizaphis graminum (strain Sg)).